The sequence spans 197 residues: MLATKVCFVTVGATASFEELVRAALDPSFVTALEENGYSHLLVQYGKNAVIYENFLKQYPPERRPWRRINISGFSFHEHGLGGDFALAQADISKGRSGGLVISHAGSGTILEVLRMGIPLIVVPNPSLQDNHQEELARQLQKQGYVVASHYQNLCQALHQAEQLRARMLRWPPVRGPDQKNQPTLEQVMSDEMGFVD.

The segment at 174–197 (VRGPDQKNQPTLEQVMSDEMGFVD) is disordered.

Belongs to the glycosyltransferase 28 family. Heterodimer with alg14 to form a functional enzyme.

The protein resides in the endoplasmic reticulum. It catalyses the reaction an N-acetyl-alpha-D-glucosaminyl-diphospho-di-trans,poly-cis-dolichol + UDP-N-acetyl-alpha-D-glucosamine = an N,N'-diacetylchitobiosyl-diphospho-di-trans,poly-cis-dolichol + UDP + H(+). Functionally, involved in protein N-glycosylation. Essential for the second step of the dolichol-linked oligosaccharide pathway. In Aspergillus fumigatus (strain ATCC MYA-4609 / CBS 101355 / FGSC A1100 / Af293) (Neosartorya fumigata), this protein is UDP-N-acetylglucosamine transferase subunit alg13 (alg13).